The sequence spans 76 residues: Liver-expressed antimicrobial peptide 2 (76 aa).

The first 22 residues, 1-22 (MLQLKLFAVLLTCLLLLGQVNS), serve as a signal peptide directing secretion. A propeptide spanning residues 23-36 (SPVPEVSSAKRSRR) is cleaved from the precursor. 2 disulfides stabilise this stretch: cysteine 53-cysteine 64 and cysteine 59-cysteine 69.

Belongs to the LEAP2 family.

The protein resides in the secreted. In terms of biological role, has an antimicrobial activity. The sequence is that of Liver-expressed antimicrobial peptide 2 (Leap2) from Mus musculus (Mouse).